A 598-amino-acid polypeptide reads, in one-letter code: UvrABC system protein C (598 aa).

Positions 14–91 (DSPGCYLHKD…IQKNMPKYNI (78 aa)) constitute a GIY-YIG domain. One can recognise a UVR domain in the interval 196-231 (DKIIEDLRSKMLAASEEMAFERAAEYRDLISGIATM).

Belongs to the UvrC family. In terms of assembly, interacts with UvrB in an incision complex.

It localises to the cytoplasm. The UvrABC repair system catalyzes the recognition and processing of DNA lesions. UvrC both incises the 5' and 3' sides of the lesion. The N-terminal half is responsible for the 3' incision and the C-terminal half is responsible for the 5' incision. This Streptococcus pyogenes serotype M3 (strain ATCC BAA-595 / MGAS315) protein is UvrABC system protein C.